The primary structure comprises 462 residues: Cysteine--tRNA ligase (462 aa).

Residue cysteine 29 coordinates Zn(2+). The 'HIGH' region signature appears at 31–41 (PTVYNHAHIGN). Residues cysteine 211, histidine 236, and glutamate 240 each coordinate Zn(2+). The 'KMSKS' region motif lies at 269–273 (KMSKS). Lysine 272 is an ATP binding site.

Belongs to the class-I aminoacyl-tRNA synthetase family. As to quaternary structure, monomer. The cofactor is Zn(2+).

The protein localises to the cytoplasm. The enzyme catalyses tRNA(Cys) + L-cysteine + ATP = L-cysteinyl-tRNA(Cys) + AMP + diphosphate. The sequence is that of Cysteine--tRNA ligase from Caulobacter sp. (strain K31).